The chain runs to 377 residues: Actin-related protein T2 (377 aa).

It belongs to the actin family.

It is found in the cytoplasm. It localises to the cytoskeleton. In Mus musculus (Mouse), this protein is Actin-related protein T2 (Actrt2).